The following is a 119-amino-acid chain: Hisactophilin-3 (119 aa).

Residue glycine 2 is the site of N-myristoyl glycine attachment. Positions 8 to 110 (SHHGHFLSAE…SIYTTHHHHH (103 aa)) are contains several HHXH repeats. 2 tandem repeats follow at residues 34–47 (FHVENHGHHKVAIR) and 75–87 (FHLEHHGGKVSIK). The tract at residues 34–87 (FHVENHGHHKVAIRTHANKYVSINDNNDVYISHHFHGEHSLFHLEHHGGKVSIK) is 2 X 13 AA approximate repeats.

Belongs to the hisactophilin family. Phosphorylated.

It localises to the cytoplasm. Its subcellular location is the cell membrane. Its function is as follows. May act as an intracellular pH sensor that links chemotactic signals to responses in the microfilament system of the cells by nucleating actin polymerization or stabilizing the filaments. The chain is Hisactophilin-3 (hatC) from Dictyostelium discoideum (Social amoeba).